We begin with the raw amino-acid sequence, 257 residues long: 5'-nucleotidase SurE (257 aa).

Residues D8, D9, S40, and N92 each coordinate a divalent metal cation.

The protein belongs to the SurE nucleotidase family. Requires a divalent metal cation as cofactor.

The protein localises to the cytoplasm. It catalyses the reaction a ribonucleoside 5'-phosphate + H2O = a ribonucleoside + phosphate. In terms of biological role, nucleotidase that shows phosphatase activity on nucleoside 5'-monophosphates. The chain is 5'-nucleotidase SurE from Rhizobium etli (strain ATCC 51251 / DSM 11541 / JCM 21823 / NBRC 15573 / CFN 42).